A 368-amino-acid polypeptide reads, in one-letter code: RNA polymerase sigma factor SigA (368 aa).

Positions 16 to 90 (TLTLEDVKKQ…KLNPSDLSAP (75 aa)) are sigma-70 factor domain-1. Positions 69 to 90 (LVNEKDSSDTDEKLNPSDLSAP) are disordered. The segment covering 71–83 (NEKDSSDTDEKLN) has biased composition (basic and acidic residues). Residues 135–205 (LAEANLRLVV…TRAIADQART (71 aa)) are sigma-70 factor domain-2. Positions 159 to 162 (DLIQ) match the Interaction with polymerase core subunit RpoC motif. A sigma-70 factor domain-3 region spans residues 214–291 (ETINKLIRVQ…QEAQSPSDHA (78 aa)). The interval 303 to 356 (VLDTLTDREENVLRLRFGLDDGRTRTLEEVGKVFGVTRERIRQIEAKALRKLRH) is sigma-70 factor domain-4. Residues 329-348 (LEEVGKVFGVTRERIRQIEA) constitute a DNA-binding region (H-T-H motif).

Belongs to the sigma-70 factor family. RpoD/SigA subfamily. In terms of assembly, interacts transiently with the RNA polymerase catalytic core formed by RpoA, RpoB, RpoC and RpoZ (2 alpha, 1 beta, 1 beta' and 1 omega subunit) to form the RNA polymerase holoenzyme that can initiate transcription. Interacts (via sigma-70 factor domain 4) with the phage G1 protein gp67; this inhibits rRNA synthesis. Interaction with phage G1 protein gp67 does not inhibit transcription in general, but selectively inhibits transcription from promoters that require interaction of the RNA polymerase alpha subunit with DNA sequences upstream of the -35 promoter element.

Its subcellular location is the cytoplasm. Its function is as follows. Sigma factors are initiation factors that promote the attachment of RNA polymerase to specific initiation sites and are then released. This sigma factor is the primary sigma factor during exponential growth. This Staphylococcus aureus (strain NCTC 8325 / PS 47) protein is RNA polymerase sigma factor SigA.